Reading from the N-terminus, the 369-residue chain is Histidinol-phosphate aminotransferase 2 (369 aa).

Position 229 is an N6-(pyridoxal phosphate)lysine (Lys-229).

This sequence belongs to the class-II pyridoxal-phosphate-dependent aminotransferase family. Histidinol-phosphate aminotransferase subfamily. As to quaternary structure, homodimer. Pyridoxal 5'-phosphate serves as cofactor.

The catalysed reaction is L-histidinol phosphate + 2-oxoglutarate = 3-(imidazol-4-yl)-2-oxopropyl phosphate + L-glutamate. Its pathway is amino-acid biosynthesis; L-histidine biosynthesis; L-histidine from 5-phospho-alpha-D-ribose 1-diphosphate: step 7/9. This chain is Histidinol-phosphate aminotransferase 2 (hisC2), found in Pseudomonas aeruginosa (strain ATCC 15692 / DSM 22644 / CIP 104116 / JCM 14847 / LMG 12228 / 1C / PRS 101 / PAO1).